Reading from the N-terminus, the 332-residue chain is Homoarginine-6-hydroxylase 2-ODD-C23.1 (332 aa).

Residues 182–287 (PFWVMRLIGY…RVCVAFFYET (106 aa)) form the Fe2OG dioxygenase domain. Fe cation is bound by residues H210, D212, and H268. Position 278 (R278) interacts with 2-oxoglutarate.

It belongs to the iron/ascorbate-dependent oxidoreductase family. Fe(2+) serves as cofactor.

The protein localises to the cytoplasm. Its subcellular location is the cytosol. It catalyses the reaction L-homoarginine + 2-oxoglutarate + O2 = 6-hydroxy-L-homoarginine + succinate + CO2. With respect to regulation, slightly inhibited by canavanine (Can), the 5-oxa-analog of arginine. In terms of biological role, 2-oxoglutarate-dependent dioxygenase catalyzing homoarginine 6-hydroxylation thus producing 6-hydroxy-L-homoarginine. Guanidine (Gd) is in turn synthesized by the spontaneous conversion of 6-hydroxy-L-homoarginine to (S)-2-amino-6-oxohexanoate (RHEA:79843); guanidine is a nitrogen-rich compound that can serve as a defense or signaling substance. This chain is Homoarginine-6-hydroxylase 2-ODD-C23.1, found in Arabidopsis thaliana (Mouse-ear cress).